Here is a 125-residue protein sequence, read N- to C-terminus: Linear element protein rec27 (125 aa).

Residues K45 to Q104 adopt a coiled-coil conformation.

As to quaternary structure, component of linear elements (LinEs), which are similar to synaptonemal complexes, at least composed of rec27, rec25, rec10 and mug20.

The protein localises to the cytoplasm. It localises to the nucleus. The protein resides in the chromosome. During meiotic DNA recombination, binds to and activates DNA double-strand break (DSB) hotspot sites. This chain is Linear element protein rec27, found in Schizosaccharomyces pombe (strain 972 / ATCC 24843) (Fission yeast).